Reading from the N-terminus, the 1456-residue chain is Macrophage mannose receptor 1 (1456 aa).

The signal sequence occupies residues methionine 1–leucine 18. The Extracellular portion of the chain corresponds to leucine 19–alanine 1389. The Ricin B-type lectin domain maps to threonine 22–tyrosine 142. Disulfide bonds link cysteine 35-cysteine 49 and cysteine 74-cysteine 91. Residue asparagine 104 is glycosylated (N-linked (GlcNAc...) asparagine). Residues alanine 163–leucine 211 form the Fibronectin type-II domain. 4 disulfide bridges follow: cysteine 168–cysteine 194, cysteine 182–cysteine 209, cysteine 247–cysteine 340, and cysteine 316–cysteine 332. In terms of domain architecture, C-type lectin 1 spans leucine 225–lysine 341. Asparagine 344 carries N-linked (GlcNAc...) asparagine glycosylation. C-type lectin domains follow at residues tyrosine 369–lysine 487, histidine 511–lysine 626, arginine 655–glutamine 778, and tyrosine 807–glutamine 923. 2 disulfide bridges follow: cysteine 391/cysteine 486 and cysteine 463/cysteine 478. Asparagine 529 is a glycosylation site (N-linked (GlcNAc...) asparagine). 7 disulfide bridges follow: cysteine 532/cysteine 625, cysteine 600/cysteine 617, cysteine 646/cysteine 659, cysteine 680/cysteine 777, cysteine 753/cysteine 769, cysteine 828/cysteine 922, and cysteine 899/cysteine 914. N-linked (GlcNAc...) asparagine glycans are attached at residues asparagine 926 and asparagine 930. 3 consecutive C-type lectin domains span residues tyrosine 952 to glutamine 1080, tyrosine 1102 to lysine 1213, and phenylalanine 1241 to lysine 1356. Cystine bridges form between cysteine 977-cysteine 1079, cysteine 1052-cysteine 1071, cysteine 1123-cysteine 1212, cysteine 1190-cysteine 1204, cysteine 1263-cysteine 1355, and cysteine 1332-cysteine 1347. An N-linked (GlcNAc...) asparagine glycan is attached at asparagine 1160. N-linked (GlcNAc...) asparagine glycosylation is present at asparagine 1205. A helical transmembrane segment spans residues glycine 1390–phenylalanine 1410. The Cytoplasmic segment spans residues tyrosine 1411–isoleucine 1456.

(Microbial infection) Interacts with Dengue virus. As to quaternary structure, (Microbial infection) May act as a receptor for hepatitis B virus, enabling uptake of the virus in hepatic dendritic cells.

The protein localises to the endosome membrane. It localises to the cell membrane. Functionally, mediates the endocytosis of glycoproteins by macrophages. Binds both sulfated and non-sulfated polysaccharide chains. In terms of biological role, (Microbial infection) Acts as a phagocytic receptor for bacteria, fungi and other pathogens. (Microbial infection) Acts as a receptor for Dengue virus envelope protein E. Its function is as follows. (Microbial infection) Interacts with Hepatitis B virus envelope protein. The sequence is that of Macrophage mannose receptor 1 (MRC1) from Homo sapiens (Human).